We begin with the raw amino-acid sequence, 157 residues long: Protein Smg (157 aa).

Belongs to the Smg family.

The sequence is that of Protein Smg from Serratia proteamaculans (strain 568).